The sequence spans 125 residues: Small ribosomal subunit protein uS12c (125 aa).

It belongs to the universal ribosomal protein uS12 family. In terms of assembly, part of the 30S ribosomal subunit.

The protein localises to the plastid. It localises to the chloroplast. Functionally, with S4 and S5 plays an important role in translational accuracy. Located at the interface of the 30S and 50S subunits. In Oltmannsiellopsis viridis (Marine flagellate), this protein is Small ribosomal subunit protein uS12c (rps12).